Here is a 311-residue protein sequence, read N- to C-terminus: Fructose-1,6-bisphosphatase class 1 (311 aa).

Mg(2+)-binding residues include E90, D110, L112, and D113. Substrate contacts are provided by residues 113-116 (DGSS), Y221, and K251. E257 is a binding site for Mg(2+).

It belongs to the FBPase class 1 family. As to quaternary structure, homotetramer. Requires Mg(2+) as cofactor.

Its subcellular location is the cytoplasm. It carries out the reaction beta-D-fructose 1,6-bisphosphate + H2O = beta-D-fructose 6-phosphate + phosphate. Its pathway is carbohydrate biosynthesis; gluconeogenesis. The sequence is that of Fructose-1,6-bisphosphatase class 1 from Methanospirillum hungatei JF-1 (strain ATCC 27890 / DSM 864 / NBRC 100397 / JF-1).